The sequence spans 122 residues: Large ribosomal subunit protein uL14 (122 aa).

Belongs to the universal ribosomal protein uL14 family. Part of the 50S ribosomal subunit. Forms a cluster with proteins L3 and L19. In the 70S ribosome, L14 and L19 interact and together make contacts with the 16S rRNA in bridges B5 and B8.

Its function is as follows. Binds to 23S rRNA. Forms part of two intersubunit bridges in the 70S ribosome. The sequence is that of Large ribosomal subunit protein uL14 from Shouchella clausii (strain KSM-K16) (Alkalihalobacillus clausii).